We begin with the raw amino-acid sequence, 566 residues long: DNA ligase B (566 aa).

Lys-125 serves as the catalytic N6-AMP-lysine intermediate.

Belongs to the NAD-dependent DNA ligase family. LigB subfamily.

The catalysed reaction is NAD(+) + (deoxyribonucleotide)n-3'-hydroxyl + 5'-phospho-(deoxyribonucleotide)m = (deoxyribonucleotide)n+m + AMP + beta-nicotinamide D-nucleotide.. Functionally, catalyzes the formation of phosphodiester linkages between 5'-phosphoryl and 3'-hydroxyl groups in double-stranded DNA using NAD as a coenzyme and as the energy source for the reaction. The polypeptide is DNA ligase B (Pseudomonas putida (strain ATCC 47054 / DSM 6125 / CFBP 8728 / NCIMB 11950 / KT2440)).